Consider the following 416-residue polypeptide: D-amino acid dehydrogenase 2 (416 aa).

3–17 (ITVLGAGVVGTAAAY) contacts FAD.

The protein belongs to the DadA oxidoreductase family. The cofactor is FAD.

It catalyses the reaction a D-alpha-amino acid + A + H2O = a 2-oxocarboxylate + AH2 + NH4(+). Functionally, oxidative deamination of D-amino acids. This chain is D-amino acid dehydrogenase 2 (dadA2), found in Mesorhizobium japonicum (strain LMG 29417 / CECT 9101 / MAFF 303099) (Mesorhizobium loti (strain MAFF 303099)).